The chain runs to 214 residues: Large ribosomal subunit protein eL14 (214 aa).

Lys-79 carries the post-translational modification N6-acetyllysine. Lys-85 carries the post-translational modification N6-acetyllysine; alternate. Lys-85 is modified (N6-succinyllysine; alternate). Lys-124 participates in a covalent cross-link: Glycyl lysine isopeptide (Lys-Gly) (interchain with G-Cter in SUMO2). Residue Ser-139 is modified to Phosphoserine. The disordered stretch occupies residues Pro-161–Ala-214. One copy of the 1-1; approximate repeat lies at Lys-170–Ala-174. The interval Lys-170 to Pro-189 is 4 X 5 AA tandem repeats of Q-K-A-[APS]-X. Over residues Ala-172–Ala-214 the composition is skewed to low complexity. Tandem repeats lie at residues Gln-175 to Ala-179, Gln-180 to Gly-184, Gln-185 to Pro-189, Lys-192 to Gln-194, and Lys-195 to Gln-197. The tract at residues Lys-192–Gln-197 is 2 X 3 AA tandem repeats of K-G-Q. Lys-203 is modified (N6-succinyllysine).

This sequence belongs to the eukaryotic ribosomal protein eL14 family. As to quaternary structure, component of the large ribosomal subunit.

Its subcellular location is the cytoplasm. Its function is as follows. Component of the large ribosomal subunit. The ribosome is a large ribonucleoprotein complex responsible for the synthesis of proteins in the cell. The sequence is that of Large ribosomal subunit protein eL14 (RPL14) from Bos taurus (Bovine).